We begin with the raw amino-acid sequence, 227 residues long: Phosphoribosylformylglycinamidine synthase subunit PurQ (227 aa).

Residues 2 to 226 (KFAVIQFPGS…VKAWKEEQVN (225 aa)) form the Glutamine amidotransferase type-1 domain. The active-site Nucleophile is Cys-86. Residues His-195 and Glu-197 contribute to the active site.

Part of the FGAM synthase complex composed of 1 PurL, 1 PurQ and 2 PurS subunits.

Its subcellular location is the cytoplasm. It carries out the reaction N(2)-formyl-N(1)-(5-phospho-beta-D-ribosyl)glycinamide + L-glutamine + ATP + H2O = 2-formamido-N(1)-(5-O-phospho-beta-D-ribosyl)acetamidine + L-glutamate + ADP + phosphate + H(+). The catalysed reaction is L-glutamine + H2O = L-glutamate + NH4(+). It participates in purine metabolism; IMP biosynthesis via de novo pathway; 5-amino-1-(5-phospho-D-ribosyl)imidazole from N(2)-formyl-N(1)-(5-phospho-D-ribosyl)glycinamide: step 1/2. Part of the phosphoribosylformylglycinamidine synthase complex involved in the purines biosynthetic pathway. Catalyzes the ATP-dependent conversion of formylglycinamide ribonucleotide (FGAR) and glutamine to yield formylglycinamidine ribonucleotide (FGAM) and glutamate. The FGAM synthase complex is composed of three subunits. PurQ produces an ammonia molecule by converting glutamine to glutamate. PurL transfers the ammonia molecule to FGAR to form FGAM in an ATP-dependent manner. PurS interacts with PurQ and PurL and is thought to assist in the transfer of the ammonia molecule from PurQ to PurL. This chain is Phosphoribosylformylglycinamidine synthase subunit PurQ, found in Listeria monocytogenes serotype 4a (strain HCC23).